The following is a 378-amino-acid chain: Odorant receptor 45a (378 aa).

Residues methionine 1–proline 30 are Cytoplasmic-facing. A helical transmembrane segment spans residues isoleucine 31 to alanine 51. Residues leucine 52–alanine 129 are Extracellular-facing. Residues alanine 130–valine 150 form a helical membrane-spanning segment. At glutamate 151 to histidine 173 the chain is on the cytoplasmic side. Residues phenylalanine 174–isoleucine 194 form a helical membrane-spanning segment. Residues alanine 195 to aspartate 197 are Extracellular-facing. A helical membrane pass occupies residues threonine 198–leucine 218. The Cytoplasmic segment spans residues glutamate 219–serine 249. The helical transmembrane segment at isoleucine 250–alanine 270 threads the bilayer. The Extracellular portion of the chain corresponds to phenylalanine 271–arginine 285. Residues alanine 286–isoleucine 306 form a helical membrane-spanning segment. Residues lysine 307 to glutamine 342 are Cytoplasmic-facing. Residues arginine 343–isoleucine 363 traverse the membrane as a helical segment. Topologically, residues arginine 364–arginine 378 are extracellular.

This sequence belongs to the insect chemoreceptor superfamily. Heteromeric odorant receptor channel (TC 1.A.69) family. Or1a subfamily. In terms of assembly, interacts with Orco. Complexes exist early in the endomembrane system in olfactory sensory neurons (OSNs), coupling these complexes to the conserved ciliary trafficking pathway.

Its subcellular location is the cell membrane. Functionally, odorant receptor which mediates acceptance or avoidance behavior, depending on its substrates. The odorant receptor repertoire encodes a large collection of odor stimuli that vary widely in identity, intensity, and duration. May form a complex with Orco to form odorant-sensing units, providing sensitive and prolonged odorant signaling and calcium permeability. Involved in the behavioral responses to hexanol, pentyl acetate, benzyl acetate, and 2-heptanone. The protein is Odorant receptor 45a (Or45a) of Drosophila melanogaster (Fruit fly).